Reading from the N-terminus, the 145-residue chain is Large ribosomal subunit protein bL17 (145 aa).

It belongs to the bacterial ribosomal protein bL17 family. Part of the 50S ribosomal subunit. Contacts protein L32.

This is Large ribosomal subunit protein bL17 from Orientia tsutsugamushi (strain Boryong) (Rickettsia tsutsugamushi).